A 571-amino-acid polypeptide reads, in one-letter code: uncharacterized protein (571 aa).

The Cytoplasmic segment spans residues 1–3 (MNS). The chain crosses the membrane as a helical span at residues 4–24 (LQILSFVGFTLLVAVITWWKV). Residues 25–74 (RKTDTGSQQGYFLAGRSLKAPVIAASLMLTNLSTEQLVGLSGQAYKSGMS) lie on the Periplasmic side of the membrane. A helical transmembrane segment spans residues 75–95 (VMGWEVTSAVTLIFLALIFLP). The Cytoplasmic portion of the chain corresponds to 96-118 (RYLKRGIATIPDFLEERYDKTTR). Residues 119 to 139 (IIIDFCFLIATGVCFLPIVLY) traverse the membrane as a helical segment. Topologically, residues 140–162 (SGALALNSLFHVGESLQISHGAA) are periplasmic. A helical transmembrane segment spans residues 163-183 (IWLLVILLGLAGILYAVIGGL). The Cytoplasmic portion of the chain corresponds to 184–191 (RAMAVADS). A helical membrane pass occupies residues 192–212 (INGIGLVIGGLMVPVFGLIAM). The Periplasmic portion of the chain corresponds to 213-240 (GKGSFMQGIEQLTTVHAEKLNSIGGPTD). A helical membrane pass occupies residues 241–261 (PLPIGAAFTGLILVNTFYWCT). Topologically, residues 262 to 283 (NQGIVQRTLASKSLAEGQKGAL) are cytoplasmic. A helical transmembrane segment spans residues 284–304 (LTAVLKMLDPLVLVLPGLIAF). Over 305–324 (HLYQDLPKADMAYPTLVNNV) the chain is Periplasmic. The chain crosses the membrane as a helical span at residues 325–345 (LPVPMVGFFGAVLFGAVISTF). Residues 346–380 (NGFLNSASTLFSMGIYRRIINQNAEPQQLVTVGRK) are Cytoplasmic-facing. A helical membrane pass occupies residues 381–401 (FGFFIAIVSVLVAPWIANAPQ). The Periplasmic portion of the chain corresponds to 402–415 (GLYSWMKQLNGIYN). The chain crosses the membrane as a helical span at residues 416–436 (VPLVTIIIMGFFFPRIPALAA). Position 437 (K437) is a topological domain, cytoplasmic. Residues 438-458 (VAMGIGIISYITINYLVKFDF) traverse the membrane as a helical segment. The Periplasmic portion of the chain corresponds to 459–460 (HF). The chain crosses the membrane as a helical span at residues 461–481 (LYVLACTFCINVVVMLVIGFI). The Cytoplasmic segment spans residues 482–505 (KPRATPFTFKDAFAVDMKPWKNVK). A helical membrane pass occupies residues 506–526 (IASIGILFAMIGVYAGLAEFG). Residues 527–532 (GYGTRW) are Periplasmic-facing. Residues 533–553 (LAMISYFIAAVVIVYLIFDSW) traverse the membrane as a helical segment. The Cytoplasmic segment spans residues 554–571 (RHRHDPAVTFTPDGKDSL).

Belongs to the sodium:solute symporter (SSF) (TC 2.A.21) family.

The protein localises to the cell inner membrane. This is an uncharacterized protein from Escherichia coli (strain K12).